The chain runs to 1148 residues: MSYPGNVHSLRDLYNVFKDAPNRERLILDMNSQLARIDNIAQILTMTEEQEKEVIAKMSASLANLGLNMDNAIRELKNMETVHMDRVSVLTVYQSAVLNITNNTHTISDSMKSIMYDLSGYVNTTIYPTIQSPATEDRSSLIPLNYKNMKNIFDDKHTIVFATVIGPQCVDFTTEDVTNISWIVDSHEIIKITYYPSSLIMETSIVGNRYLQYQLSLSNQTIDEYDNNGPYSCLLVFCVVGANGLLDIYSMSSQQVRKYVNDYEVGESSLIGYSTKHGSLHLSSNDIRNISHELSGSPYIDVRVTYSITAAFPDSQLLSMLLDNIQQSLGTLTACESKSFDDAYRAAMDNQFTKADVLTSSIITMRSSLNSLISSSPLLSDDTIRIVDDCTFQLASALTLTNEFASDSANLLGTFKVKQTTIDRYSNTKISEGKAVYLSPTLATMNVHSGSVVVSTDSFHNNNALKVMLLAPGLVKPDNVNFDLLSVKSNNVIDLVSDYKLDDAIIQFTDQPDYSSTTSIANAKSVVYMKTTGCIGLTYSNPNELILNMSLQLNSAAPSLGGVVNNNTTFSLTIGSTIINYVTDFEITDFTDSSGKQSLKLTSSVNLLTKLSVDMIFYAVSINAGGVIATDTHKYTDTGFDSSNYTYGWEMYDSAALNDYQDMTVVTPPKFTAKMLRPQDASKLNGDCVGGTYKKGRNILVIAGNRIFYNGVSVYFKMQKNSMISLKYFINPSGLSTVDTCDVRITRNAAFLTQIDTKLMSVQSVLNDVQRRIDIINQLMQPSRIQTLATIIQGIGGVVSLAMPLLGAIVVTIGAIVSIADPNHHGVDYQAVLNAFHSWCQYAVVARMNYGLLKADDPKLDILKRISDGSVNTFRNKPKKITLPGIDDEVIRGTSTDYIDTGINVRYNSMGLFGEGKLEEWMANTALKVQDGTANIFQKNLFSLLQKRKIVPMHARVEIIQTEKIGDVYRNTILYAGINEGSYIENSVYLTRSGNTRIKRLNMTSGPGMFKAVTESTTEVGNFKAVDWTLSGMTKEEIYNAAGLMYPNKNPAHSEVQDVYESVIRDMAEIDDTWVLQHHKTVMLPGQIEAFEHLIRVSANKFQYAFIGSNCQNFADDVVGILSQFKRPKRWVDENDFKQYIQSIYDEL.

In terms of domain architecture, PPPDE spans Q930 to L1148. Active-site residues include H954 and C1111.

It belongs to the phytoreovirus minor outer capsid protein P2 family.

It is found in the virion. Its subcellular location is the host cytoplasm. Functionally, minor capsid protein present in the outer capsid, which is required for adsorption of the virus onto host insect cells. This Nephotettix cincticeps (Green rice leafhopper) protein is Minor outer capsid protein P2.